Reading from the N-terminus, the 185-residue chain is Lysine-rich arabinogalactan protein 17 (185 aa).

The signal sequence occupies residues 1–21 (MTRNILLTVTLICIVFITVGG). The interval 25-160 (ATAPIHSPST…FSPAADDQSG (136 aa)) is disordered. Over residues 43 to 68 (SPAISPAAPTPESTEAPAKTPVEAPV) the composition is skewed to low complexity. Pro residues predominate over residues 69-88 (EAPPSPTPASTPQISPPAPS). The span at 111 to 122 (TKHKKKTKKHKT) shows a compositional bias: basic residues. Residues 135–146 (PPAPPGEAPGPG) show a composition bias toward pro residues. Residue serine 159 is the site of GPI-anchor amidated serine attachment. The propeptide at 160–185 (GAQRISVVIQMVGAAAIAWSLLVLAF) is removed in mature form.

It belongs to the lysine-rich AGP family. In terms of processing, O-glycosylated on the hydroxyproline residues. In terms of tissue distribution, predominantly expressed in open flowers. Also expressed in leaves and stems, and at a lower level in roots.

It is found in the cell membrane. Its function is as follows. Proteoglycan that seems to be implicated in diverse developmental roles such as differentiation, cell-cell recognition, embryogenesis and programmed cell death. This is Lysine-rich arabinogalactan protein 17 (AGP17) from Arabidopsis thaliana (Mouse-ear cress).